The primary structure comprises 718 residues: Neutral ceramidase B (718 aa).

The N-terminal stretch at 1–20 (MINSFKKLIILISLVIILLS) is a signal peptide. N-linked (GlcNAc...) asparagine glycosylation is found at Asn-224 and Asn-252. Catalysis depends on Ser-298, which acts as the Nucleophile. Asn-358, Asn-378, Asn-391, Asn-421, Asn-422, Asn-577, Asn-610, and Asn-614 each carry an N-linked (GlcNAc...) asparagine glycan.

The protein belongs to the neutral ceramidase family.

The protein resides in the secreted. The catalysed reaction is an N-acylsphing-4-enine + H2O = sphing-4-enine + a fatty acid. Hydrolyzes the sphingolipid ceramide into sphingosine and free fatty acid. This is Neutral ceramidase B (dcd2B) from Dictyostelium discoideum (Social amoeba).